Consider the following 88-residue polypeptide: Apolipoprotein C-I (88 aa).

The N-terminal stretch at 1–26 (MRLLLSLPVLLVALSVVLERPAPAQA) is a signal peptide.

It belongs to the apolipoprotein C1 family.

It localises to the secreted. Functionally, inhibitor of lipoprotein binding to the low density lipoprotein (LDL) receptor, LDL receptor-related protein, and very low density lipoprotein (VLDL) receptor. Associates with high density lipoproteins (HDL) and the triacylglycerol-rich lipoproteins in the plasma and makes up about 10% of the protein of the VLDL and 2% of that of HDL. Appears to interfere directly with fatty acid uptake and is also the major plasma inhibitor of cholesteryl ester transfer protein (CETP). Binds free fatty acids and reduces their intracellular esterification. Modulates the interaction of APOE with beta-migrating VLDL and inhibits binding of beta-VLDL to the LDL receptor-related protein. The chain is Apolipoprotein C-I (APOC1) from Tupaia glis (Common tree shrew).